A 359-amino-acid chain; its full sequence is Nicotinate-nucleotide--dimethylbenzimidazole phosphoribosyltransferase (359 aa).

Glu-318 (proton acceptor) is an active-site residue.

It belongs to the CobT family. In terms of assembly, homodimer.

It carries out the reaction 5,6-dimethylbenzimidazole + nicotinate beta-D-ribonucleotide = alpha-ribazole 5'-phosphate + nicotinate + H(+). Its pathway is nucleoside biosynthesis; alpha-ribazole biosynthesis; alpha-ribazole from 5,6-dimethylbenzimidazole: step 1/2. Functionally, catalyzes the synthesis of alpha-ribazole-5'-phosphate from nicotinate mononucleotide (NAMN) and 5,6-dimethylbenzimidazole (DMB). In Escherichia coli O17:K52:H18 (strain UMN026 / ExPEC), this protein is Nicotinate-nucleotide--dimethylbenzimidazole phosphoribosyltransferase.